We begin with the raw amino-acid sequence, 505 residues long: tRNA-2-methylthio-N(6)-dimethylallyladenosine synthase (505 aa).

The interval 1–39 is disordered; the sequence is MGQKAKAQAPTTHPRPHTLSSQVAPALPRRPRHAAPESL. Positions 47-162 constitute an MTTase N-terminal domain; the sequence is MKAHLITYGC…IGAALESNER (116 aa). The [4Fe-4S] cluster site is built by Cys-56, Cys-92, Cys-125, Cys-194, Cys-198, and Cys-201. Positions 180–413 constitute a Radical SAM core domain; that stretch reads PSGKLQAHLT…IARQKDWSAR (234 aa). Positions 416–479 constitute a TRAM domain; that stretch reads AQKVGTVQQV…PHMMYGHILG (64 aa).

It belongs to the methylthiotransferase family. MiaB subfamily. As to quaternary structure, monomer. It depends on [4Fe-4S] cluster as a cofactor.

The protein localises to the cytoplasm. It catalyses the reaction N(6)-dimethylallyladenosine(37) in tRNA + (sulfur carrier)-SH + AH2 + 2 S-adenosyl-L-methionine = 2-methylsulfanyl-N(6)-dimethylallyladenosine(37) in tRNA + (sulfur carrier)-H + 5'-deoxyadenosine + L-methionine + A + S-adenosyl-L-homocysteine + 2 H(+). Its function is as follows. Catalyzes the methylthiolation of N6-(dimethylallyl)adenosine (i(6)A), leading to the formation of 2-methylthio-N6-(dimethylallyl)adenosine (ms(2)i(6)A) at position 37 in tRNAs that read codons beginning with uridine. The sequence is that of tRNA-2-methylthio-N(6)-dimethylallyladenosine synthase from Deinococcus radiodurans (strain ATCC 13939 / DSM 20539 / JCM 16871 / CCUG 27074 / LMG 4051 / NBRC 15346 / NCIMB 9279 / VKM B-1422 / R1).